Here is a 474-residue protein sequence, read N- to C-terminus: Bifunctional protein HldE (474 aa).

Residues Met-1–Glu-321 are ribokinase. Asn-198 to Glu-201 serves as a coordination point for ATP. Residue Asp-266 is part of the active site. The interval Phe-348–Ser-474 is cytidylyltransferase.

In the N-terminal section; belongs to the carbohydrate kinase PfkB family. The protein in the C-terminal section; belongs to the cytidylyltransferase family. Homodimer.

The enzyme catalyses D-glycero-beta-D-manno-heptose 7-phosphate + ATP = D-glycero-beta-D-manno-heptose 1,7-bisphosphate + ADP + H(+). It catalyses the reaction D-glycero-beta-D-manno-heptose 1-phosphate + ATP + H(+) = ADP-D-glycero-beta-D-manno-heptose + diphosphate. It participates in nucleotide-sugar biosynthesis; ADP-L-glycero-beta-D-manno-heptose biosynthesis; ADP-L-glycero-beta-D-manno-heptose from D-glycero-beta-D-manno-heptose 7-phosphate: step 1/4. Its pathway is nucleotide-sugar biosynthesis; ADP-L-glycero-beta-D-manno-heptose biosynthesis; ADP-L-glycero-beta-D-manno-heptose from D-glycero-beta-D-manno-heptose 7-phosphate: step 3/4. In terms of biological role, catalyzes the phosphorylation of D-glycero-D-manno-heptose 7-phosphate at the C-1 position to selectively form D-glycero-beta-D-manno-heptose-1,7-bisphosphate. Its function is as follows. Catalyzes the ADP transfer from ATP to D-glycero-beta-D-manno-heptose 1-phosphate, yielding ADP-D-glycero-beta-D-manno-heptose. In Wolinella succinogenes (strain ATCC 29543 / DSM 1740 / CCUG 13145 / JCM 31913 / LMG 7466 / NCTC 11488 / FDC 602W) (Vibrio succinogenes), this protein is Bifunctional protein HldE.